Reading from the N-terminus, the 191-residue chain is Protein GrpE (191 aa).

This sequence belongs to the GrpE family. As to quaternary structure, homodimer.

It is found in the cytoplasm. Its function is as follows. Participates actively in the response to hyperosmotic and heat shock by preventing the aggregation of stress-denatured proteins, in association with DnaK and GrpE. It is the nucleotide exchange factor for DnaK and may function as a thermosensor. Unfolded proteins bind initially to DnaJ; upon interaction with the DnaJ-bound protein, DnaK hydrolyzes its bound ATP, resulting in the formation of a stable complex. GrpE releases ADP from DnaK; ATP binding to DnaK triggers the release of the substrate protein, thus completing the reaction cycle. Several rounds of ATP-dependent interactions between DnaJ, DnaK and GrpE are required for fully efficient folding. This chain is Protein GrpE, found in Nitratidesulfovibrio vulgaris (strain ATCC 29579 / DSM 644 / CCUG 34227 / NCIMB 8303 / VKM B-1760 / Hildenborough) (Desulfovibrio vulgaris).